The primary structure comprises 258 residues: Transcription factor ORG3 (258 aa).

Residues 76–128 (VKKLNHNASERDRRRKINSLFSSLRSCLPASGQSKKLSIPATVSRSLKYIPEL) enclose the bHLH domain.

As to quaternary structure, homodimer. Expressed in vascular tissues. Detected in roots.

The protein localises to the nucleus. In Arabidopsis thaliana (Mouse-ear cress), this protein is Transcription factor ORG3 (ORG3).